The primary structure comprises 212 residues: Large ribosomal subunit protein uL3 (212 aa).

Q153 carries the N5-methylglutamine modification.

This sequence belongs to the universal ribosomal protein uL3 family. As to quaternary structure, part of the 50S ribosomal subunit. Forms a cluster with proteins L14 and L19. Post-translationally, methylated by PrmB.

Its function is as follows. One of the primary rRNA binding proteins, it binds directly near the 3'-end of the 23S rRNA, where it nucleates assembly of the 50S subunit. The sequence is that of Large ribosomal subunit protein uL3 from Shewanella denitrificans (strain OS217 / ATCC BAA-1090 / DSM 15013).